Consider the following 178-residue polypeptide: Caveolin-1 (178 aa).

Ser-2 is subject to N-acetylserine. Ser-2 is subject to Phosphoserine. The segment at 2-94 (SGGKYVDSEG…WKASFTTFTV (93 aa)) is required for homooligomerization. The Cytoplasmic portion of the chain corresponds to 2 to 104 (SGGKYVDSEG…TKYWFYRLLS (103 aa)). An N6-acetyllysine; alternate modification is found at Lys-5. Lys-5 is covalently cross-linked (Glycyl lysine isopeptide (Lys-Gly) (interchain with G-Cter in ubiquitin); alternate). At Tyr-6 the chain carries Phosphotyrosine. At Ser-9 the chain carries Phosphoserine. Tyr-14 bears the Phosphotyrosine; by ABL1 mark. Tyr-25 is modified (phosphotyrosine). Glycyl lysine isopeptide (Lys-Gly) (interchain with G-Cter in ubiquitin) cross-links involve residues Lys-26, Lys-30, Lys-39, Lys-47, and Lys-57. An interaction with CAVIN3 region spans residues 82 to 94 (DGIWKASFTTFTV). An intramembrane region (helical) is located at residues 105-125 (ALFGIPMALIWGIYFAILSFL). The Cytoplasmic segment spans residues 126 to 178 (HIWAVVPCIKSFLIEIQCVSRVYSIYVHTFCDPFFEAVGKIFSSIRINMQKEI). The segment at 131 to 142 (VPCIKSFLIEIQ) is interacts with SPRY1, SPRY2, SPRY3 and SPRY4. S-palmitoyl cysteine attachment occurs at residues Cys-133, Cys-143, and Cys-156. Residues 149–160 (SIYVHTFCDPFF) form an interacts with SPRY1, SPRY2, and SPRY4 region. Residues 167 to 178 (FSSIRINMQKEI) form an interacts with SPRY1, SPRY2, SPRY3 and SPRY4 region.

The protein belongs to the caveolin family. Homooligomer. Interacts with GLIPR2. Interacts with NOSTRIN. Interacts with SNAP25 and STX1A. Interacts (via the N-terminus) with DPP4; the interaction is direct. Interacts with CTNNB1, CDH1 and JUP. Interacts with PACSIN2; this interaction induces membrane tubulation. Interacts with SLC7A9. Interacts with BMX and BTK. Interacts with TGFBR1. Interacts with CAVIN3 (via leucine-zipper domain) in a cholesterol-sensitive manner. Interacts with CAVIN1. Interacts with EHD2 in a cholesterol-dependent manner. Forms a ternary complex with UBXN6 and VCP; mediates CAV1 targeting to lysosomes for degradation. Interacts with ABCG1; this interaction regulates ABCG1-mediated cholesterol efflux. Interacts with NEU3; this interaction enhances NEU3 sialidase activity within caveola. Interacts (via C-terminus) with SPRY1, SPRY2 (via C-terminus), SPRY3, and SPRY4. Interacts with IGFBP5; this interaction allows trafficking of IGFBP5 from the plasma membrane to the nucleus. Phosphorylated at Tyr-14 by ABL1 in response to oxidative stress. Post-translationally, ubiquitinated. Undergo monoubiquitination and multi- and/or polyubiquitination. Monoubiquitination of N-terminal lysines promotes integration in a ternary complex with UBXN6 and VCP which promotes oligomeric CAV1 targeting to lysosomes for degradation. Ubiquitinated by ZNRF1; leading to degradation and modulation of the TLR4-mediated immune response.

It localises to the golgi apparatus membrane. It is found in the cell membrane. Its subcellular location is the membrane. The protein localises to the caveola. The protein resides in the membrane raft. In terms of biological role, may act as a scaffolding protein within caveolar membranes. Forms a stable heterooligomeric complex with CAV2 that targets to lipid rafts and drives caveolae formation. Mediates the recruitment of CAVIN proteins (CAVIN1/2/3/4) to the caveolae. Interacts directly with G-protein alpha subunits and can functionally regulate their activity. Involved in the costimulatory signal essential for T-cell receptor (TCR)-mediated T-cell activation. Its binding to DPP4 induces T-cell proliferation and NF-kappa-B activation in a T-cell receptor/CD3-dependent manner. Recruits CTNNB1 to caveolar membranes and may regulate CTNNB1-mediated signaling through the Wnt pathway. Negatively regulates TGFB1-mediated activation of SMAD2/3 by mediating the internalization of TGFBR1 from membrane rafts leading to its subsequent degradation. Binds 20(S)-hydroxycholesterol (20(S)-OHC). This chain is Caveolin-1 (CAV1), found in Mustela putorius furo (European domestic ferret).